Reading from the N-terminus, the 504-residue chain is Cytochrome P450 4A24 (504 aa).

2 helical membrane passes run 6–26 (LASASGLLQVASLLGLLLLLL) and 112–132 (VVYRLLIPWIGCGLLLLNGQT). Heme is bound at residue Cys451.

This sequence belongs to the cytochrome P450 family. Heme is required as a cofactor.

The protein localises to the endoplasmic reticulum membrane. It catalyses the reaction an omega-methyl-long-chain fatty acid + reduced [NADPH--hemoprotein reductase] + O2 = an omega-hydroxy-long-chain fatty acid + oxidized [NADPH--hemoprotein reductase] + H2O + H(+). Functionally, catalyzes the omega- and (omega-1)-hydroxylation of various fatty acids such as laurate and palmitate. Has no activity toward taurochenodeoxycholic acid. The polypeptide is Cytochrome P450 4A24 (CYP4A24) (Sus scrofa (Pig)).